We begin with the raw amino-acid sequence, 180 residues long: Large ribosomal subunit protein uL5 (180 aa).

It belongs to the universal ribosomal protein uL5 family. As to quaternary structure, part of the 50S ribosomal subunit; part of the 5S rRNA/L5/L18/L25 subcomplex. Contacts the 5S rRNA and the P site tRNA. Forms a bridge to the 30S subunit in the 70S ribosome.

In terms of biological role, this is one of the proteins that bind and probably mediate the attachment of the 5S RNA into the large ribosomal subunit, where it forms part of the central protuberance. In the 70S ribosome it contacts protein S13 of the 30S subunit (bridge B1b), connecting the 2 subunits; this bridge is implicated in subunit movement. Contacts the P site tRNA; the 5S rRNA and some of its associated proteins might help stabilize positioning of ribosome-bound tRNAs. The sequence is that of Large ribosomal subunit protein uL5 from Limosilactobacillus fermentum (strain NBRC 3956 / LMG 18251) (Lactobacillus fermentum).